A 354-amino-acid chain; its full sequence is UDP-N-acetylglucosamine--N-acetylmuramyl-(pentapeptide) pyrophosphoryl-undecaprenol N-acetylglucosamine transferase (354 aa).

Residues 11 to 13, Arg-164, Ser-194, and Gln-289 each bind UDP-N-acetyl-alpha-D-glucosamine; that span reads TAG.

This sequence belongs to the glycosyltransferase 28 family. MurG subfamily.

The protein resides in the cell membrane. The enzyme catalyses di-trans,octa-cis-undecaprenyl diphospho-N-acetyl-alpha-D-muramoyl-L-alanyl-D-glutamyl-meso-2,6-diaminopimeloyl-D-alanyl-D-alanine + UDP-N-acetyl-alpha-D-glucosamine = di-trans,octa-cis-undecaprenyl diphospho-[N-acetyl-alpha-D-glucosaminyl-(1-&gt;4)]-N-acetyl-alpha-D-muramoyl-L-alanyl-D-glutamyl-meso-2,6-diaminopimeloyl-D-alanyl-D-alanine + UDP + H(+). It participates in cell wall biogenesis; peptidoglycan biosynthesis. Functionally, cell wall formation. Catalyzes the transfer of a GlcNAc subunit on undecaprenyl-pyrophosphoryl-MurNAc-pentapeptide (lipid intermediate I) to form undecaprenyl-pyrophosphoryl-MurNAc-(pentapeptide)GlcNAc (lipid intermediate II). The chain is UDP-N-acetylglucosamine--N-acetylmuramyl-(pentapeptide) pyrophosphoryl-undecaprenol N-acetylglucosamine transferase from Clostridium botulinum (strain Loch Maree / Type A3).